Here is an 84-residue protein sequence, read N- to C-terminus: Cytoplasmic envelopment protein 3 (84 aa).

G2 carries the N-myristoyl glycine; by host lipid modification. The segment at 40-46 (DLDDLRC) is asp/Glu-rich (acidic).

This sequence belongs to the herpesviridae cytoplasmic envelopment protein 3 family. As to quaternary structure, interacts with cytoplasmic envelopment protein 2; this interaction is essential for the proper localization of each protein to the assembly complex and thus for the production of infectious virus. Myristoylation and palmitoylation (probably on one or more of the nearby cysteines at the N-terminus) enable membrane-binding and Golgi apparatus-specific targeting and are essential for efficient packaging. In terms of processing, phosphorylated. Phosphorylation does not seem to be required for recycling to the host Golgi apparatus. Packaging is selective for underphosphorylated forms.

It localises to the virion tegument. The protein localises to the virion membrane. The protein resides in the host cell membrane. Its subcellular location is the host Golgi apparatus membrane. Plays an important role in the cytoplasmic envelopment of tegument proteins and capsids during the assembly and egress processes. Also participates in viral entry at the fusion step probably by regulating the core fusion machinery. The polypeptide is Cytoplasmic envelopment protein 3 (MDV023) (Gallus gallus (Chicken)).